Consider the following 1130-residue polypeptide: Alpha-mannosidase 2 (1130 aa).

The Cytoplasmic segment spans residues 1 to 14; it reads MRTRVLRCRPFSTR. The chain crosses the membrane as a helical; Signal-anchor for type II membrane protein span at residues 15 to 35; sequence ILLLLLFVLAFGVYCYFYNAS. At 36–1130 the chain is on the lumenal side; the sequence is PQNYNKPRIS…MEVKTYKIRF (1095 aa). N-linked (GlcNAc...) asparagine glycosylation is present at Asn-117. Residues His-133 and Asp-135 each contribute to the Zn(2+) site. Residue Asn-166 is glycosylated (N-linked (GlcNAc...) asparagine). Residues Asp-247 and His-527 each coordinate Zn(2+). The Nucleophile role is filled by Asp-247. 4 N-linked (GlcNAc...) asparagine glycosylation sites follow: Asn-622, Asn-683, Asn-1056, and Asn-1095.

Belongs to the glycosyl hydrolase 38 family. Homodimer; disulfide-linked. It depends on Zn(2+) as a cofactor. Post-translationally, N-glycosylated.

It localises to the microsome membrane. The protein resides in the golgi apparatus membrane. It catalyses the reaction N(4)-{beta-D-GlcNAc-(1-&gt;2)-alpha-D-Man-(1-&gt;3)-[alpha-D-Man-(1-&gt;3)-[alpha-D-Man-(1-&gt;6)]-alpha-D-Man-(1-&gt;6)]-beta-D-Man-(1-&gt;4)-beta-D-GlcNAc-(1-&gt;4)-beta-D-GlcNAc}-L-asparaginyl-[protein] + 2 H2O = 2 alpha-D-mannopyranose + an N(4)-{beta-D-GlcNAc-(1-&gt;2)-alpha-D-Man-(1-&gt;3)-[alpha-D-Man-(1-&gt;6)]-beta-D-Man-(1-&gt;4)-beta-D-GlcNAc-(1-&gt;4)-beta-D-GlcNAc}-L-asparaginyl-[protein]. It functions in the pathway protein modification; protein glycosylation. With respect to regulation, inhibited by swainsonine. Functionally, catalyzes the first committed step in the biosynthesis of complex N-glycans. It controls conversion of high mannose to complex N-glycans; the final hydrolytic step in the N-glycan maturation pathway. This chain is Alpha-mannosidase 2, found in Spodoptera frugiperda (Fall armyworm).